A 42-amino-acid polypeptide reads, in one-letter code: Statherin (42 aa).

The hydroxyapatite-binding; inhibits crystal growth stretch occupies residues 1 to 6 (DSSEEK). Residues S2 and S3 each carry the phosphoserine modification. Residues 18–42 (RYGPYQPFVPPPLYPQPYQPYQPQY) form a disordered region. Residues 18-42 (RYGPYQPFVPPPLYPQPYQPYQPQY) form a hydrophobic; inhibits precipitation of calcium phosphate salts region. The span at 24-42 (PFVPPPLYPQPYQPYQPQY) shows a compositional bias: pro residues.

The protein belongs to the histatin/statherin family. As to expression, secreted by parotid and submandibular glands.

Its subcellular location is the secreted. Functionally, salivary protein that stabilizes saliva supersaturated with calcium salts by inhibiting the precipitation of calcium phosphate salts. It also modulates hydroxyapatite crystal formation on the tooth surface. The sequence is that of Statherin (STATH) from Macaca arctoides (Stump-tailed macaque).